Consider the following 438-residue polypeptide: tRNA-2-methylthio-N(6)-dimethylallyladenosine synthase (438 aa).

Positions 3–123 (KRLFVKTYGC…LPEMVAQAAR (121 aa)) constitute an MTTase N-terminal domain. 6 residues coordinate [4Fe-4S] cluster: C12, C48, C86, C160, C164, and C167. A Radical SAM core domain is found at 146–374 (HAEGTSAFLS…QALLLDQTMR (229 aa)). The region spanning 377 to 438 (HACVGREMRI…HPNSLEAVPA (62 aa)) is the TRAM domain.

This sequence belongs to the methylthiotransferase family. MiaB subfamily. As to quaternary structure, monomer. [4Fe-4S] cluster is required as a cofactor.

The protein resides in the cytoplasm. The enzyme catalyses N(6)-dimethylallyladenosine(37) in tRNA + (sulfur carrier)-SH + AH2 + 2 S-adenosyl-L-methionine = 2-methylsulfanyl-N(6)-dimethylallyladenosine(37) in tRNA + (sulfur carrier)-H + 5'-deoxyadenosine + L-methionine + A + S-adenosyl-L-homocysteine + 2 H(+). Catalyzes the methylthiolation of N6-(dimethylallyl)adenosine (i(6)A), leading to the formation of 2-methylthio-N6-(dimethylallyl)adenosine (ms(2)i(6)A) at position 37 in tRNAs that read codons beginning with uridine. The chain is tRNA-2-methylthio-N(6)-dimethylallyladenosine synthase from Paramagnetospirillum magneticum (strain ATCC 700264 / AMB-1) (Magnetospirillum magneticum).